The primary structure comprises 469 residues: Probable ribonuclease FAU-1 (469 aa).

This sequence belongs to the FAU-1 family.

In terms of biological role, probable RNase involved in rRNA stability through maturation and/or degradation of precursor rRNAs. Binds to RNA in loop regions with AU-rich sequences. In Pyrococcus abyssi (strain GE5 / Orsay), this protein is Probable ribonuclease FAU-1.